The following is a 1499-amino-acid chain: Condensin complex subunit 1 (1499 aa).

Disordered stretches follow at residues 1–43 (MPRK…DGLS) and 1421–1499 (ITKN…MLDD). Over residues 1432–1446 (PTTMSGSSRTTSRAA) the composition is skewed to low complexity. 2 stretches are compositionally biased toward acidic residues: residues 1458–1467 (SDEDDSDSDD) and 1486–1499 (ADDD…MLDD).

Belongs to the CND1 (condensin subunit 1) family. As to quaternary structure, component of the condensin I complex, which contains the mix-1/SMC2 and smc-4/SMC4 heterodimer, and three non SMC subunits that probably regulate the complex: dpy-26, capg-1 and dpy-28. Within the complex, interacts with dpy-26 and smc-4. Component of the dosage compensation complex, which consist of the condensin I like components mix-1/SMC2 and dpy-27/SMC4, and the three non SMC subunits dpy-26, capg-1 and dpy-28. Within the complex, interacts with mix-1, dpy-27, dpy-26 and capg-1. Interacts with smcl-1. Post-translationally, sumoylated. Sumoylated in the context of the dosage compensation complex but not in the condensin I complex. Sumoylation is important for assembly of the dosage compensation complex and its robust binding to the X chromosome. Expressed in somatic and germline tissues (at protein level).

The protein resides in the nucleus. The protein localises to the chromosome. Required for both chromosome condensation and segregation during mitosis and meiosis and X-chromosome dosage compensation depending on its binding partners. Regulatory subunit of the condensin I complex, a complex required for conversion of interphase chromatin into mitotic-like condense chromosomes. The condensin I complex probably introduces positive supercoils into relaxed DNA in the presence of type I topoisomerases and converts nicked DNA into positive knotted forms in the presence of type II topoisomerases. The condensin I complex function is required for proper chromosome segregation in mitosis and meiosis. As a member of the condensin I complex, further controls the crossover number and distribution in meiosis by restricting double strand break formation, possibly by influencing higher-order chromosome structure. Plays a role in robust cytokinesis upon presence of chromatin obstructions. Also a member of the condensin I-like dosage compensation complex that associates specifically with hermaphrodite X chromosomes to reduce their gene transcription during interphase, possibly through chromatin reorganization. The protein is Condensin complex subunit 1 of Caenorhabditis elegans.